The following is a 418-amino-acid chain: Delta(14)-sterol reductase TM7SF2 (418 aa).

The next 6 membrane-spanning stretches (helical) occupy residues 13–35 (FGGP…HLLL), 62–81 (ALLL…LLPA), 102–124 (GFQA…LPLG), 129–148 (MLLP…SLFL), 255–277 (FGFM…QAQF), and 287–304 (LPMA…YYIF). Residues Lys-311, Arg-315, Leu-338, Trp-343, and 350 to 351 (NY) contribute to the NADP(+) site. A helical membrane pass occupies residues 355-377 (LIMALAWSLPCGVSHLLPYFYLL). Residues Asp-390, 394 to 398 (CLQKY), and Tyr-405 contribute to the NADP(+) site.

This sequence belongs to the ERG4/ERG24 family. Expressed in adult heart, brain, pancreas, lung, liver, skeletal muscle, kidney, ovary, prostate, testis and adrenal gland, but not detected in placenta, spleen, thymus, small intestine, colon (mucosal lining), or peripheral blood leukocytes.

It localises to the microsome membrane. The protein localises to the endoplasmic reticulum membrane. The catalysed reaction is 4,4-dimethyl-5alpha-cholesta-8,24-dien-3beta-ol + NADP(+) = 4,4-dimethyl-5alpha-cholesta-8,14,24-trien-3beta-ol + NADPH + H(+). It carries out the reaction 5alpha-cholest-8,14-dien-3beta-ol + NADPH + H(+) = 5alpha-cholest-8-en-3beta-ol + NADP(+). The enzyme catalyses 4,4-dimethyl-8,14-cholestadien-3beta-ol + NADPH + H(+) = 4,4-dimethyl-5alpha-cholest-8-en-3beta-ol + NADP(+). It participates in steroid biosynthesis; cholesterol biosynthesis. Functionally, catalyzes the reduction of the C14-unsaturated bond of lanosterol, as part of the metabolic pathway leading to cholesterol biosynthesis. The polypeptide is Delta(14)-sterol reductase TM7SF2 (TM7SF2) (Homo sapiens (Human)).